The sequence spans 176 residues: Large ribosomal subunit protein uL16 (176 aa).

Belongs to the universal ribosomal protein uL16 family.

The polypeptide is Large ribosomal subunit protein uL16 (Thermoplasma volcanium (strain ATCC 51530 / DSM 4299 / JCM 9571 / NBRC 15438 / GSS1)).